We begin with the raw amino-acid sequence, 346 residues long: S-adenosylmethionine:tRNA ribosyltransferase-isomerase (346 aa).

The protein belongs to the QueA family. As to quaternary structure, monomer.

The protein resides in the cytoplasm. The enzyme catalyses 7-aminomethyl-7-carbaguanosine(34) in tRNA + S-adenosyl-L-methionine = epoxyqueuosine(34) in tRNA + adenine + L-methionine + 2 H(+). Its pathway is tRNA modification; tRNA-queuosine biosynthesis. In terms of biological role, transfers and isomerizes the ribose moiety from AdoMet to the 7-aminomethyl group of 7-deazaguanine (preQ1-tRNA) to give epoxyqueuosine (oQ-tRNA). This chain is S-adenosylmethionine:tRNA ribosyltransferase-isomerase, found in Neisseria gonorrhoeae (strain ATCC 700825 / FA 1090).